The primary structure comprises 91 residues: Large ribosomal subunit protein uL23c (91 aa).

The protein belongs to the universal ribosomal protein uL23 family. As to quaternary structure, part of the 50S ribosomal subunit.

It localises to the plastid. The protein localises to the chloroplast. Functionally, binds to 23S rRNA. The polypeptide is Large ribosomal subunit protein uL23c (rpl23) (Huperzia lucidula (Shining clubmoss)).